Reading from the N-terminus, the 246-residue chain is Exosome complex component Rrp41 (246 aa).

This sequence belongs to the RNase PH family. Rrp41 subfamily. In terms of assembly, component of the archaeal exosome complex. Forms a hexameric ring-like arrangement composed of 3 Rrp41-Rrp42 heterodimers. The hexameric ring associates with a trimer of Rrp4 and/or Csl4 subunits.

The protein resides in the cytoplasm. Catalytic component of the exosome, which is a complex involved in RNA degradation. Has 3'-&gt;5' exoribonuclease activity. Can also synthesize heteromeric RNA-tails. The sequence is that of Exosome complex component Rrp41 from Pyrobaculum calidifontis (strain DSM 21063 / JCM 11548 / VA1).